The following is a 287-amino-acid chain: Membrane protein insertase YidC 2 (287 aa).

The first 26 residues, 1-26 (MKKKKRFKQKLLIASLVIGLMAVLSG), serve as a signal peptide directing secretion. Cys27 is lipidated: N-palmitoyl cysteine. Residue Cys27 is the site of S-diacylglycerol cysteine attachment. Transmembrane regions (helical) follow at residues 65–85 (YAVGIIVVTILIRLLIMPLMI), 135–155 (MMGCLPLLIQMPILLGFYQAI), 178–198 (YILPVVAALTTFLSSKISMMG), 207–224 (AMIVYIMPVMILFMGITL), and 228–250 (LALYWIIGNIFTVFQTLLINNPF).

Belongs to the OXA1/ALB3/YidC family. Type 2 subfamily.

It is found in the cell membrane. Functionally, required for the insertion and/or proper folding and/or complex formation of integral membrane proteins into the membrane. Involved in integration of membrane proteins that insert both dependently and independently of the Sec translocase complex, as well as at least some lipoproteins. This Listeria monocytogenes serovar 1/2a (strain ATCC BAA-679 / EGD-e) protein is Membrane protein insertase YidC 2.